The following is a 549-amino-acid chain: Dicarboxylate transporter 2.2, chloroplastic (549 aa).

Residues 1–54 constitute a chloroplast transit peptide; sequence MESLALRSISLSASYLSLHRSSSKSFALLPPSISVHTSPTLRSLSISSPRFTLR. A disordered region spans residues 57–79; sequence ASSLPEEQNKPQPPPPSPPQPQG. The span at 67–77 shows a compositional bias: pro residues; it reads PQPPPPSPPQP. Transmembrane regions (helical) follow at residues 79–99, 115–135, 151–171, 220–240, 247–267, 294–314, 344–364, 365–385, 403–423, 436–456, 470–490, and 523–543; these read GAKL…RFLI, IFLF…AWAF, TAFA…FFFA, AGGV…SYPG, LGSF…AILL, WFKV…LIIY, NEWI…FGEA, IGIA…LLGV, WFAV…VAWM, LTWP…HYLF, FLAM…CLAF, and VGFV…SFWW.

It belongs to the SLC13A/DASS transporter (TC 2.A.47) family. DIT1 subfamily. Expressed in roots, rosette and cauline leaves, stems, flowers and siliques.

It localises to the plastid. The protein resides in the chloroplast inner membrane. Its function is as follows. May be involved in the transport of dicarboxylate compounds. In Arabidopsis thaliana (Mouse-ear cress), this protein is Dicarboxylate transporter 2.2, chloroplastic (DIT2-2).